Consider the following 508-residue polypeptide: DNA polymerase II small subunit (508 aa).

Residues 66-80 show a composition bias toward low complexity; that stretch reads ASSAAQTSAPASTPP. Residues 66–122 are disordered; it reads ASSAAQTSAPASTPPDEATTHTDPSATDTPPNHDGGRAATADARSVEIDGDMTGAST. The span at 86 to 95 shows a compositional bias: polar residues; that stretch reads HTDPSATDTP.

Belongs to the DNA polymerase delta/II small subunit family. In terms of assembly, heterodimer of a large subunit and a small subunit.

The enzyme catalyses DNA(n) + a 2'-deoxyribonucleoside 5'-triphosphate = DNA(n+1) + diphosphate. It catalyses the reaction Exonucleolytic cleavage in the 3'- to 5'-direction to yield nucleoside 5'-phosphates.. In terms of biological role, possesses two activities: a DNA synthesis (polymerase) and an exonucleolytic activity that degrades single-stranded DNA in the 3' to 5' direction. Has a template-primer preference which is characteristic of a replicative DNA polymerase. The protein is DNA polymerase II small subunit of Halobacterium salinarum (strain ATCC 29341 / DSM 671 / R1).